Consider the following 597-residue polypeptide: Elongation factor 4 (597 aa).

The region spanning 2–184 is the tr-type G domain; it reads DHIRNFSIIA…SLIAKVPPPK (183 aa). Residues 14 to 19 and 131 to 134 each bind GTP; these read DHGKST and NKID.

The protein belongs to the TRAFAC class translation factor GTPase superfamily. Classic translation factor GTPase family. LepA subfamily.

The protein localises to the cell inner membrane. The catalysed reaction is GTP + H2O = GDP + phosphate + H(+). Functionally, required for accurate and efficient protein synthesis under certain stress conditions. May act as a fidelity factor of the translation reaction, by catalyzing a one-codon backward translocation of tRNAs on improperly translocated ribosomes. Back-translocation proceeds from a post-translocation (POST) complex to a pre-translocation (PRE) complex, thus giving elongation factor G a second chance to translocate the tRNAs correctly. Binds to ribosomes in a GTP-dependent manner. In Burkholderia cenocepacia (strain HI2424), this protein is Elongation factor 4.